The sequence spans 139 residues: Actin-depolymerizing factor 9 (139 aa).

Positions 7–139 (GLAVNDECKF…SLDIIRARAH (133 aa)) constitute an ADF-H domain.

It belongs to the actin-binding proteins ADF family.

Its function is as follows. Actin-depolymerizing protein. Severs actin filaments (F-actin) and binds to actin monomers. The protein is Actin-depolymerizing factor 9 (ADF9) of Oryza sativa subsp. japonica (Rice).